A 336-amino-acid polypeptide reads, in one-letter code: Octanoyltransferase (336 aa).

The segment covering 1 to 16 (MPKSALMSSSFQTSVS) has biased composition (polar residues). 2 disordered regions span residues 1–22 (MPKS…PLPV) and 48–88 (QGKG…GGGR). The interval 1–92 (MPKSALMSSS…AAGGGRTIRD (92 aa)) is unknown. The interval 93 to 336 (VKEAAFDVLD…GQEALSVASP (244 aa)) is lipB domain. A BPL/LPL catalytic domain is found at 124–318 (VGGRPTLLLV…AFALTFADYD (195 aa)). Substrate-binding positions include 170 to 177 (RGGDVTYH), 244 to 246 (SIG), and 257 to 259 (GIG). Cysteine 275 serves as the catalytic Acyl-thioester intermediate.

It in the C-terminal section; belongs to the LipB family.

The protein localises to the cytoplasm. The catalysed reaction is octanoyl-[ACP] + L-lysyl-[protein] = N(6)-octanoyl-L-lysyl-[protein] + holo-[ACP] + H(+). It functions in the pathway protein modification; protein lipoylation via endogenous pathway; protein N(6)-(lipoyl)lysine from octanoyl-[acyl-carrier-protein]: step 1/2. Its function is as follows. Catalyzes the transfer of endogenously produced octanoic acid from octanoyl-acyl-carrier-protein onto the lipoyl domains of lipoate-dependent enzymes. Lipoyl-ACP can also act as a substrate although octanoyl-ACP is likely to be the physiological substrate. In Deinococcus radiodurans (strain ATCC 13939 / DSM 20539 / JCM 16871 / CCUG 27074 / LMG 4051 / NBRC 15346 / NCIMB 9279 / VKM B-1422 / R1), this protein is Octanoyltransferase.